The following is a 133-amino-acid chain: uncharacterized protein (133 aa).

The tract at residues 82–133 (KIKSYSPSRSQKALNNPSKIRTKQTNNDTTIQQSNNTTSTNTKPSSNTNTQQ) is disordered. The span at 86 to 100 (YSPSRSQKALNNPSK) shows a compositional bias: polar residues. Over residues 105–133 (QTNNDTTIQQSNNTTSTNTKPSSNTNTQQ) the composition is skewed to low complexity.

This is an uncharacterized protein from Acidianus convivator (ABV).